A 759-amino-acid polypeptide reads, in one-letter code: Putative ATP-dependent DNA helicase YjcD (759 aa).

A disordered region spans residues 68–121 (ACEPKPSKEGKKEDDQESGVIRLPKGKAIAADPSPAVTEWHRPRSIKPGTPFVP). Over residues 69–81 (CEPKPSKEGKKED) the composition is skewed to basic and acidic residues. Residues 134–413 (VGLNTDQLKA…IYLTANYRST (280 aa)) enclose the UvrD-like helicase ATP-binding domain. Residues 158-163 (GSGKTR) and R411 each bind ATP. A UvrD-like helicase C-terminal domain is found at 414–676 (HPIVSSADIV…QLMTIHRSKG (263 aa)).

The protein belongs to the helicase family. UvrD subfamily.

The protein resides in the cytoplasm. The enzyme catalyses Couples ATP hydrolysis with the unwinding of duplex DNA by translocating in the 3'-5' direction.. It catalyses the reaction ATP + H2O = ADP + phosphate + H(+). In terms of biological role, may be involved in the generation of recombinogenic substrates for the subsequent action of RecA. The protein is Putative ATP-dependent DNA helicase YjcD (yjcD) of Bacillus subtilis (strain 168).